A 388-amino-acid polypeptide reads, in one-letter code: F-box protein ETP2 (388 aa).

The F-box domain occupies 2–48 (KTIQEQLPNDLVEEILCRVPATSLRRLRSTCKAWNRLFKGDRILASK).

As to quaternary structure, interacts with EIN2 (via C-terminus).

In terms of biological role, negative regulator of EIN2 protein stability. The protein is F-box protein ETP2 of Arabidopsis thaliana (Mouse-ear cress).